The sequence spans 71 residues: Protein SlyX homolog (71 aa).

Belongs to the SlyX family.

In Thioalkalivibrio sulfidiphilus (strain HL-EbGR7), this protein is Protein SlyX homolog.